The primary structure comprises 3461 residues: Reelin (3461 aa).

The N-terminal stretch at 1–26 (MERGCWAPRALVLAVLLLLATLRARA) is a signal peptide. The Reelin domain occupies 27-191 (ATGYYPRFSP…GAPTEATAYS (165 aa)). Residues C41 and C127 are joined by a disulfide bond. Residue N141 is glycosylated (N-linked (GlcNAc...) asparagine). C155 and C179 are joined by a disulfide. N258, N290, and N306 each carry an N-linked (GlcNAc...) asparagine glycan. A disulfide bond links C540 and C581. Residues 593–604 (EFSTNHGRSWSL) form a BNR 1 repeat. C609 and C614 are oxidised to a cystine. Residue N629 is glycosylated (N-linked (GlcNAc...) asparagine). The 32-residue stretch at 671-702 (IGPSCLKFCSGRGQCTRHGCKCDPGFSGPACE) folds into the EGF-like 1 domain. Intrachain disulfides connect C675–C685 and C692–C701. Residues 799–810 (HYSYDNGITWKL) form a BNR 2 repeat. A disulfide bridge connects residues C895 and C937. One copy of the BNR 3 repeat lies at 952-963 (EYSANHGLTWHL). Intrachain disulfides connect C968–C975, C1034–C1044, and C1051–C1060. The EGF-like 2 domain maps to 1030 to 1061 (IGQQCPNMCSGHGSCDHGVCRCDQGYQGTECH). A BNR 4 repeat occupies 1157–1168 (QYSNNGGIQWHL). N-linked (GlcNAc...) asparagine glycosylation occurs at N1267. A BNR 5 repeat occupies 1323-1334 (QYSHDAGMSWFL). 4 cysteine pairs are disulfide-bonded: C1339–C1348, C1413–C1423, C1417–C1428, and C1430–C1441. In terms of domain architecture, EGF-like 3 spans 1409–1442 (ISEPCPSYCSGHGDCISGVCFCDLGYTAAQGTCV). N1447 carries N-linked (GlcNAc...) asparagine glycosylation. Residues C1475 and C1522 are joined by a disulfide bond. One copy of the BNR 6 repeat lies at 1535-1546 (QYSNDNGILWHL). A glycan (N-linked (GlcNAc...) asparagine) is linked at N1600. A disulfide bridge links C1633 with C1673. Residues 1686 to 1697 (QYSLNNGKDWQL) form a BNR 7 repeat. The cysteines at positions 1702 and 1709 are disulfide-linked. A glycan (N-linked (GlcNAc...) asparagine) is linked at N1750. The EGF-like 4 domain maps to 1765–1796 (LASGCPWMCSGRGICDSGRCVCDRGFGGPFCV). Residues 1884 to 1895 (QFSVSGGVTWHL) form a BNR 8 repeat. Residue N1921 is glycosylated (N-linked (GlcNAc...) asparagine). C1983 and C2030 form a disulfide bridge. A BNR 9 repeat occupies 2043–2054 (EFSRDFGATWHL). A disulfide bridge links C2059 with C2070. Positions 2061 and 2074 each coordinate Zn(2+). One can recognise an EGF-like 5 domain in the interval 2129–2161 (IGPQCEEMCYGHGSCINGTKCICDPGYSGPTCK). Cystine bridges form between C2133–C2143, C2137–C2149, and C2151–C2160. N2145 is a glycosylation site (N-linked (GlcNAc...) asparagine). E2179 is a binding site for Zn(2+). C2195 and C2235 are disulfide-bonded. The stretch at 2250–2261 (QYSLNGGLSWSL) is one BNR 10 repeat. Residue E2264 participates in Zn(2+) binding. Residues N2269 and N2317 are each glycosylated (N-linked (GlcNAc...) asparagine). Intrachain disulfides connect C2348-C2387, C2393-C2559, C2482-C2492, C2486-C2497, C2499-C2508, and C2544-C2584. E2397, E2399, and H2460 together coordinate Zn(2+). A BNR 11 repeat occupies 2399-2410 (EYSVDLGLSWHP). The 32-residue stretch at 2478–2509 (IGDGCLDMCSGHGRCVQGSCVCDEQWGGLYCD) folds into the EGF-like 6 domain. The N-linked (GlcNAc...) asparagine glycan is linked to N2569. BNR repeat units follow at residues 2598 to 2609 (EYSVNGGITWNL) and 2778 to 2789 (QFSTDFGVSWSY). C2794 and C2801 are joined by a disulfide. An EGF-like 7 domain is found at 2853-2884 (LGPGCLDNCGGHGDCLKEQCICDPGYSGPNCY). The cysteines at positions 2919 and 2966 are disulfide-linked. N2962 carries an N-linked (GlcNAc...) asparagine glycan. The BNR 14 repeat unit spans residues 2979–2990 (DFSTDGGITWTL). 2 N-linked (GlcNAc...) asparagine glycosylation sites follow: N3016 and N3073. One copy of the BNR 15 repeat lies at 3143 to 3155 (EYTKDARSDSWQL). C3160 and C3170 are oxidised to a cystine. N3185 carries an N-linked (GlcNAc...) asparagine glycan. The EGF-like 8 domain occupies 3228-3260 (IGEACPKLCSGHGYCTTGAVCICDESFQGDDCS). 4 disulfides stabilise this stretch: C3232/C3242, C3236/C3248, C3250/C3259, and C3296/C3346. One copy of the BNR 16 repeat lies at 3363 to 3374 (QYSVNNGITWHV). N-linked (GlcNAc...) asparagine glycosylation is found at N3412 and N3439.

It belongs to the reelin family. In terms of assembly, oligomer of disulfide-linked homodimers. N-glycosylated and to a lesser extent also O-glycosylated. In terms of tissue distribution, the major isoform 1 is neuron-specific. It is abundantly produced during brain ontogenesis by the Cajal-Retzius cells and other pioneer neurons located in the telencephalic marginal zone and by granule cells of the external granular layer of the cerebellum. Expression is located in deeper layers in the developing hippocampus and olfactory bulb, low levels of expression are also detected in the immature striatum. At early developmental stages, expressed also in hypothalamic differentiation fields, tectum and spinal cord. A moderate to low level of expression occurs in the septal area, striatal fields, habenular nuclei, some thalamic nuclei, particularly the lateral geniculate, the retina and some nuclei of the reticular formation in the central field of the medulla. Very low levels found in liver and kidney. No expression in radial glial cells, cortical plate, Purkinje cells and inferior olivary neurons. The minor isoform 2 is only expressed in non neuronal cells. The minor isoform 3 is found in the same cells as isoform 1, but is almost undetectable in retina and brain stem.

The protein resides in the secreted. The protein localises to the extracellular space. It is found in the extracellular matrix. Functionally, extracellular matrix serine protease secreted by pioneer neurons that plays a role in layering of neurons in the cerebral cortex and cerebellum by coordinating cell positioning during neurodevelopment. Regulates microtubule function in neurons and neuronal migration. Binding to the extracellular domains of lipoprotein receptors VLDLR and LRP8/APOER2 induces tyrosine phosphorylation of DAB1 and modulation of TAU phosphorylation. Affects migration of sympathetic preganglionic neurons in the spinal cord, where it seems to act as a barrier to neuronal migration. Enzymatic activity is important for the modulation of cell adhesion. In Mus musculus (Mouse), this protein is Reelin (Reln).